We begin with the raw amino-acid sequence, 749 residues long: Catalase-peroxidase 2 (749 aa).

The first 27 residues, 1–27, serve as a signal peptide directing secretion; it reads MFKRTIPLFAAFTLAISPSVFPNYAYA. Positions 107–229 form a cross-link, tryptophyl-tyrosyl-methioninium (Trp-Tyr) (with M-255); it reads WHAAGTYRIY…LAATVMGLIY (123 aa). The Proton acceptor role is filled by histidine 108. The segment at residues 229 to 255 is a cross-link (tryptophyl-tyrosyl-methioninium (Tyr-Met) (with W-107)); it reads YVNPEGPNGVPDPLAAAEKIRETFGRM. Histidine 270 provides a ligand contact to heme b.

Belongs to the peroxidase family. Peroxidase/catalase subfamily. As to quaternary structure, homodimer or homotetramer. It depends on heme b as a cofactor. Post-translationally, formation of the three residue Trp-Tyr-Met cross-link is important for the catalase, but not the peroxidase activity of the enzyme.

It carries out the reaction H2O2 + AH2 = A + 2 H2O. It catalyses the reaction 2 H2O2 = O2 + 2 H2O. Functionally, bifunctional enzyme with both catalase and broad-spectrum peroxidase activity. The polypeptide is Catalase-peroxidase 2 (Legionella pneumophila (strain Paris)).